Consider the following 541-residue polypeptide: MASVGTLAFDEYGRPFLIIKDQDRKSRLMGLEALKSHIMAAKAVANTMRTSLGPNGLDKMMVDKDGDVTVTNDGATILSMMDVDHQIAKLMVELSKSQDDEIGDGTTGVVVLAGALLEEAEQLLDRGIHPIRIADGYEQAARIAIQHLDKISDNVLVDINNPEPLIQTAKTTLGSKVVNSCHRQMAEIAVNAVLTVADMERRDVDFELIKVEGKVGGRLEDTKLIKGVIVDKDFSHPQMPKEVLNAKIAILTCPFEPPKPKTKHKLDVTSVEDYKALQKYEKEKFEEMIAQIKETGANLAICQWGFDDEANHLLLQNGLPAVRWVGGPEIELIAIATGGRIVPRFSELTSEKLGFAGVVREISFGTTKDKMLVIEQCKNSRAVTIFIRGGNKMIIEEAKRSLHDALCVIRNLIRDNRVVYGGGAAEISCALAVSQEADKCPTLEQYAMRAFADALEVIPMALSENSGMNPIQTMTEVRARQVKESNPALGIDCLHKGSNDMQYQHVIETLIGKKQQISLATQMVRMILKIDDIRKPGESEE.

Ala-2 bears the N-acetylalanine mark. Lys-20 participates in a covalent cross-link: Glycyl lysine isopeptide (Lys-Gly) (interchain with G-Cter in SUMO2). Ser-26 is modified (phosphoserine). Residue Gly-53 participates in ADP binding. Position 53 (Gly-53) interacts with ATP. Position 104 (Asp-104) interacts with Mg(2+). Residues Gly-105, Thr-106, Thr-107, and Ser-175 each coordinate ADP. Positions 106 and 107 each coordinate ATP. Residues Lys-210, Lys-214, Lys-265, Lys-275, and Lys-279 each participate in a glycyl lysine isopeptide (Lys-Gly) (interchain with G-Cter in SUMO2) cross-link. Phosphoserine is present on Ser-346. Lys-392 participates in a covalent cross-link: Glycyl lysine isopeptide (Lys-Gly) (interchain with G-Cter in SUMO2). Residues Gly-422, Asp-492, Glu-508, and Lys-513 each contribute to the ADP site. ATP is bound at residue Gly-422. Position 539 is a phosphoserine (Ser-539).

The protein belongs to the TCP-1 chaperonin family. As to quaternary structure, component of the chaperonin-containing T-complex (TRiC), a hexadecamer composed of two identical back-to-back stacked rings enclosing a protein folding chamber. Each ring is made up of eight different subunits: TCP1/CCT1, CCT2, CCT3, CCT4, CCT5, CCT6A/CCT6, CCT7, CCT8. Interacts with PACRG. Interacts with DNAAF4. Interacts with DLEC1. Interacts with SPMAP2. Ubiquitinated by the DCX(DCAF12) complex specifically recognizes the diglutamate (Glu-Glu) at the C-terminus, leading to its degradation.

It localises to the cytoplasm. The protein resides in the cytoskeleton. It is found in the microtubule organizing center. Its subcellular location is the centrosome. The catalysed reaction is ATP + H2O = ADP + phosphate + H(+). Component of the chaperonin-containing T-complex (TRiC), a molecular chaperone complex that assists the folding of actin, tubulin and other proteins upon ATP hydrolysis. The TRiC complex mediates the folding of WRAP53/TCAB1, thereby regulating telomere maintenance. As part of the TRiC complex may play a role in the assembly of BBSome, a complex involved in ciliogenesis regulating transports vesicles to the cilia. This chain is T-complex protein 1 subunit epsilon (Cct5), found in Rattus norvegicus (Rat).